We begin with the raw amino-acid sequence, 175 residues long: ATP synthase subunit d, mitochondrial (175 aa).

An N-acetylserine modification is found at Ser-2.

In terms of assembly, F-type ATP synthases have 2 components, the catalytic core F(1) and the membrane-embedded component F(0), linked together by a central stalk and a peripheral stalk. The central stalk, also called rotor shaft, is often seen as part of F(1). The peripheral stalk is seen as part of F(0). F(0) contains the membrane channel next to the rotor. F-type ATP synthases form dimers but each monomer functions independently in ATP generation. The dimer consists of 18 different polypeptides: ATP1 (subunit alpha, part of F(1), 3 molecules per monomer), ATP2 (subunit beta, part of F(1), 3 molecules per monomer), ATP3 (subunit gamma, part of the central stalk), ATP4 (subunit b, part of the peripheral stalk), ATP5/OSCP (subunit 5/OSCP, part of the peripheral stalk), ATP6 (subunit a, part of the peripheral stalk), ATP7 (subunit d, part of the peripheral stalk), ATP8 (subunit 8, part of the peripheral stalk), OLI1 (subunit c, part of the rotor, 10 molecules per monomer), ATP14 (subunit h, part of the peripheral stalk), ATP15 (subunit epsilon, part of the central stalk), ATP16 (subunit delta, part of the central stalk), ATP17 (subunit f, part of the peripheral stalk), ATP18 (subunit i/j, part of the peripheral stalk). Dimer-specific subunits are ATP19 (subunit k, at interface between monomers), ATP20 (subunit g, at interface between monomers), TIM11 (subunit e, at interface between monomers). Also contains subunit L.

The protein localises to the mitochondrion inner membrane. Its function is as follows. Mitochondrial membrane ATP synthase (F(1)F(0) ATP synthase or Complex V) produces ATP from ADP in the presence of a proton gradient across the membrane which is generated by electron transport complexes of the respiratory chain. F-type ATP synthases consist of two structural domains, F(1) - containing the extramembraneous catalytic core, and F(0) - containing the membrane proton channel, linked together by a central stalk and a peripheral stalk. During catalysis, ATP synthesis in the catalytic domain of F(1) is coupled via a rotary mechanism of the central stalk subunits to proton translocation. Part of the complex F(0) domain and the peripheral stalk, which acts as a stator to hold the catalytic alpha/ATP1(3)beta/ATP2(3) subcomplex and subunit a/ATP6 static relative to the rotary elements. The sequence is that of ATP synthase subunit d, mitochondrial from Pichia angusta (Yeast).